A 636-amino-acid chain; its full sequence is Outer spore wall assembly protein SHE10 (636 aa).

The signal sequence occupies residues 1 to 23 (MRLVSKLLKALLVLLLAFGSVRY). Coiled-coil stretches lie at residues 433–460 (RAHL…LFEE) and 551–584 (KANL…TEFE). The segment at 565 to 607 (QQREKEKAESASMKASTEFELSSSSFSSSSPSTASSCTASSTS) is disordered. The span at 579–607 (ASTEFELSSSSFSSSSPSTASSCTASSTS) shows a compositional bias: low complexity.

It belongs to the SHE10 family. Component of the mitochondria-localized RNase mitochondrial RNA-processing (RNase MRP) composed of one single RNA encoded by the NME1 gene and at least 31 proteins. Absent in the nucleus-localized RNase MRP (NuMRP).

It is found in the mitochondrion. In terms of biological role, involved in spore wall assembly. May be a component of the mitochondrial RNase MRP (MtMRP), a ribonucleoprotein endoribonuclease involved in the cleaving RNA transcripts to generate primers for DNA replication in mitochondria. This chain is Outer spore wall assembly protein SHE10, found in Kluyveromyces lactis (strain ATCC 8585 / CBS 2359 / DSM 70799 / NBRC 1267 / NRRL Y-1140 / WM37) (Yeast).